The primary structure comprises 422 residues: Zinc finger protein Gfi-1 (422 aa).

An SNAG domain region spans residues 1–20 (MPRSFLVKSKKAHSYHQPRS). The tract at residues 1 to 107 (MPRSFLVKSK…SPASEKSVCP (107 aa)) is disordered. At serine 20 the chain carries Phosphoserine. A compositionally biased stretch (low complexity) spans 34-47 (APGGADGTSSAGGA). Position 56 is a phosphoserine (serine 56). Residues 57–72 (PESQLTEAPDRSSASP) show a composition bias toward polar residues. The required for interaction with RELA stretch occupies residues 140-257 (RPCAALDRGA…LLLGGGSYKC (118 aa)). 6 consecutive C2H2-type zinc fingers follow at residues 255-278 (YKCIKCSKVFSTPHGLEVHVRRSH), 284-306 (FACEMCGKTFGHAVSLEQHKAVH), 312-334 (FDCKICGKSFKRSSTLSTHLLIH), 340-362 (YPCQYCGKRFHQKSDMKKHTFIH), 368-390 (HKCQVCGKAFSQSSNLITHSRKH), and 396-419 (FGCDLCGKGFQRKVDLRRHRETQH).

Interacts with U2AF1L4. Component of RCOR-GFI-KDM1A-HDAC complexes. Interacts directly with RCOR1, KDM1A and HDAC2. Also interacts with HDAC1 and HDAC3. Interacts (via the zinc-finger domain) with ARIH2; the interaction prevents GFI1 ubiquitination and proteasomal degradation. Interacts with PIAS3; the interaction relieves the inhibitory effect of PIAS3 on STAT3-mediated transcriptional activity. Forms a complex with EHMT2 and HDAC1 to promote 'Lys-9' dimethylation of H3 (H3K9Me2) and repress expression of target genes. Interacts directly with EHMT2. Component of the GFI1-AJUBA-HDAC1 repressor complex. Interacts directly with AJUBA (via ITS LIM domains); the interaction results in the HDAC-dependent corepression of a subset of GFI1 target genes and, occurs independently of the SNAG domain. Interacts with SPI1; the interaction inhibits SPI1 transcriptional activity targeted at macrophage-specific genes, repressing macrophage differentiation of myeloid progenitor cells and promoting granulocyte commitment. Interacts with RUNX1T1; the interaction represses HDAC-mediated transcriptional activity. Interacts with RELA; the interaction occurs on liposaccharide (LPS) stimulation and controls RELA DNA binding activity and regulates endotoxin-mediated TOLL-like receptor inflammatory response. Interacts (via the C-terminal zinc fingers) with ZBTB17; the interaction results in the recruitment of GFI1 to the CDKN1A/p21 and CDKNIB promoters and repression of transcription. Post-translationally, ubiquitinated.

The protein localises to the nucleus. Its function is as follows. Transcription repressor essential for hematopoiesis. Functions in a cell-context and development-specific manner. Binds to 5'-TAAATCAC[AT]GCA-3' in the promoter region of a large number of genes. Component of several complexes, including the EHMT2-GFI1-HDAC1, AJUBA-GFI1-HDAC1 and RCOR-GFI-KDM1A-HDAC complexes, that suppress, via histone deacetylase (HDAC) recruitment, a number of genes implicated in multilineage blood cell development. Regulates neutrophil differentiation, promotes proliferation of lymphoid cells, and is required for granulocyte development. Inhibits SPI1 transcriptional activity at macrophage-specific genes, repressing macrophage differentiation of myeloid progenitor cells and promoting granulocyte commitment. Mediates, together with U2AF1L4, the alternative splicing of CD45 and controls T-cell receptor signaling. Regulates the endotoxin-mediated Toll-like receptor (TLR) inflammatory response by antagonizing RELA. Cooperates with CBFA2T2 to regulate ITGB1-dependent neurite growth. Controls cell-cycle progression by repressing CDKNIA/p21 transcription in response to TGFB1 via recruitment of GFI1 by ZBTB17 to the CDKNIA/p21 and CDKNIB promoters. Required for the maintenance of inner ear hair cells. In addition to its role in transcription, acts as a substrate adapter for PRMT1 in the DNA damage response: facilitates the recognition of TP53BP1 and MRE11 substrates by PRMT1, promoting their methylation and the DNA damage response. In Canis lupus familiaris (Dog), this protein is Zinc finger protein Gfi-1 (GFI1).